The primary structure comprises 155 residues: Urease accessory protein UreE (155 aa).

It belongs to the UreE family.

The protein localises to the cytoplasm. In terms of biological role, involved in urease metallocenter assembly. Binds nickel. Probably functions as a nickel donor during metallocenter assembly. The chain is Urease accessory protein UreE from Synechococcus sp. (strain CC9311).